Consider the following 255-residue polypeptide: 1-(5-phosphoribosyl)-5-[(5-phosphoribosylamino)methylideneamino] imidazole-4-carboxamide isomerase (255 aa).

D8 functions as the Proton acceptor in the catalytic mechanism. The Proton donor role is filled by D129.

The protein belongs to the HisA/HisF family.

Its subcellular location is the cytoplasm. It catalyses the reaction 1-(5-phospho-beta-D-ribosyl)-5-[(5-phospho-beta-D-ribosylamino)methylideneamino]imidazole-4-carboxamide = 5-[(5-phospho-1-deoxy-D-ribulos-1-ylimino)methylamino]-1-(5-phospho-beta-D-ribosyl)imidazole-4-carboxamide. It functions in the pathway amino-acid biosynthesis; L-histidine biosynthesis; L-histidine from 5-phospho-alpha-D-ribose 1-diphosphate: step 4/9. This chain is 1-(5-phosphoribosyl)-5-[(5-phosphoribosylamino)methylideneamino] imidazole-4-carboxamide isomerase, found in Prochlorococcus marinus (strain AS9601).